A 319-amino-acid polypeptide reads, in one-letter code: Acetylglutamate kinase (319 aa).

Residues 74–75 (GG), Arg96, and Asn210 each bind substrate.

This sequence belongs to the acetylglutamate kinase family. ArgB subfamily.

Its subcellular location is the cytoplasm. The catalysed reaction is N-acetyl-L-glutamate + ATP = N-acetyl-L-glutamyl 5-phosphate + ADP. The protein operates within amino-acid biosynthesis; L-arginine biosynthesis; N(2)-acetyl-L-ornithine from L-glutamate: step 2/4. In terms of biological role, catalyzes the ATP-dependent phosphorylation of N-acetyl-L-glutamate. This chain is Acetylglutamate kinase, found in Pseudarthrobacter chlorophenolicus (strain ATCC 700700 / DSM 12829 / CIP 107037 / JCM 12360 / KCTC 9906 / NCIMB 13794 / A6) (Arthrobacter chlorophenolicus).